The following is a 921-amino-acid chain: MLGFAKKFFGSSNERKVKAMSARVAQINALEPEYAALSDEALKAKTEEFKARLAKGEPLDSLLVEAFAVVREAGKRVLGMRHFDVQMVGGMVLHGGGISEMRTGEGKTLVATLPTYLNALEGKGVHVITVNDYLAKRDAEWMGQIHNFLGLSYGVIVNGLSQGERQRAYRSDITYGTNNEFGFDYLRDNLVYSVEEMVQRGHHYVIVDEVDSILIDEARTPLIISGPTEDRSEFYKTIDVLVKDLIKDKTNFDHDEKQKQVILTEEGQERIEEILMAGGHLAEDTAGLYDAANISIVHHVNQALRANVLYTFDKDYIVKDDEVILIDEFTGRMMTGRRLSEGLHQAIEAKEGVSVQPENQTLASVTIQNYFRLYKKLAGMTGTAATEAQEFDDIYKMGVSEIPTNRPVLRIDDDDEVYRTEREKNDSILKQITDCHARGQPILVGTVSIEKSEELSRLLATYAWEWEGKKHTGIPHQVLNARFHEQEAGIVADAGVPGAVTIATNMAGRGTDIQLGGNMDMRLANWRQQQKGLGITPTHEDELAQRAELEIEIGAAKARALAAGGLFVLGTERHESRRIDNQLRGRTGRQGDPGRSKFFLSCEDDLLRIFAGERLDAIMRTFGVQEGEAITHKWLNNAIATAQKRVEQRNYEIRKNLLKYDDVVNDQRKAVFEQRQEFMEATDLSDIITEMRHDVIDDFIARYMPPKAYAEQWDIEGLDERVQAILGLTLPLKEWAAEEGFGDEEMRERLNKAADEYAAQREAIITPEQMRSVEKNFLLQMIDLQWREHLMHLDHLRNVIGLRGYGQRDPLNEYKTEAFSLFEKLLGDLRTNTTRWLMTVEIAYAEPEPLHTPEGLVEVHLDPLSGENVATAGALPEGLSPQQREALPVSVLPEGWEYTARNGACPCGSGKKFKHCHGALV.

Residues glutamine 86, glycine 104–threonine 108, and aspartate 512 contribute to the ATP site. Residues cysteine 905, cysteine 907, cysteine 916, and histidine 917 each coordinate Zn(2+).

It belongs to the SecA family. In terms of assembly, monomer and homodimer. Part of the essential Sec protein translocation apparatus which comprises SecA, SecYEG and auxiliary proteins SecDF-YajC and YidC. Zn(2+) is required as a cofactor.

The protein localises to the cell inner membrane. The protein resides in the cytoplasm. It catalyses the reaction ATP + H2O + cellular proteinSide 1 = ADP + phosphate + cellular proteinSide 2.. Part of the Sec protein translocase complex. Interacts with the SecYEG preprotein conducting channel. Has a central role in coupling the hydrolysis of ATP to the transfer of proteins into and across the cell membrane, serving both as a receptor for the preprotein-SecB complex and as an ATP-driven molecular motor driving the stepwise translocation of polypeptide chains across the membrane. In Caulobacter sp. (strain K31), this protein is Protein translocase subunit SecA.